A 558-amino-acid chain; its full sequence is Inositol-3-phosphate synthase 1 (558 aa).

Residues G67, G68, N69, N70, D141, S177, V178, Q188, R191, T228, A229, N230, T231, G278, S279, D303, S306, N337, N338, D339, and K352 each contribute to the NAD(+) site. S279 carries the post-translational modification Phosphoserine. S357 carries the phosphoserine modification. G390, D391, D419, and S420 together coordinate NAD(+). Residues A537 to T558 are disordered.

This sequence belongs to the myo-inositol 1-phosphate synthase family. NAD(+) serves as cofactor. Phosphorylation at Ser-279 and Ser-357 may be associated with a decrease in activity. As to expression, highly expressed in testis, ovary, heart, placenta and pancreas. Weakly expressed in blood leukocyte, thymus, skeletal muscle and colon.

The protein resides in the cytoplasm. It catalyses the reaction D-glucose 6-phosphate = 1D-myo-inositol 3-phosphate. Its pathway is polyol metabolism; myo-inositol biosynthesis; myo-inositol from D-glucose 6-phosphate: step 1/2. With respect to regulation, inhibited by mood-stabilizing drugs such as valproate (VPA) and lithium. Key enzyme in myo-inositol biosynthesis pathway that catalyzes the conversion of glucose 6-phosphate to 1-myo-inositol 1-phosphate in a NAD-dependent manner. Rate-limiting enzyme in the synthesis of all inositol-containing compounds. This Homo sapiens (Human) protein is Inositol-3-phosphate synthase 1 (ISYNA1).